The following is a 125-amino-acid chain: uncharacterized protein (125 aa).

The protein localises to the plastid. This is an uncharacterized protein from Euglena longa (Euglenophycean alga).